A 257-amino-acid polypeptide reads, in one-letter code: Neurotrophin-3 (257 aa).

Residues 1–18 form the signal peptide; sequence MSILFYVIFLAYLRGIQS. The propeptide occupies 19–138; the sequence is TNMDQRSLPE…VLNRTSRRKR (120 aa). A glycan (N-linked (GlcNAc...) asparagine) is linked at Asn131. Intrachain disulfides connect Cys152-Cys217, Cys195-Cys246, and Cys205-Cys248.

Belongs to the NGF-beta family. As to expression, in the embryo, the expression peak at E4.5 and decreases at later stages of development.

The protein localises to the secreted. Its function is as follows. Seems to promote the survival of visceral and proprioceptive sensory neurons. The polypeptide is Neurotrophin-3 (NTF3) (Gallus gallus (Chicken)).